The chain runs to 93 residues: UPF0369 protein RC0209 (93 aa).

The disordered stretch occupies residues 1–24; it reads MDDKKDNRHLSKPAYREECTGDTE. In terms of domain architecture, RPE1 insert spans 8 to 55; it reads RHLSKPAYREECTGDTERSTTAYMDILEDVSTGSTSKLPLEAKFVKIS.

Belongs to the SDHAF4 family.

This is UPF0369 protein RC0209 from Rickettsia conorii (strain ATCC VR-613 / Malish 7).